Reading from the N-terminus, the 235-residue chain is DUP240 protein DFP4 (235 aa).

At methionine 1–asparagine 44 the chain is on the cytoplasmic side. A helical membrane pass occupies residues isoleucine 45–alanine 65. The Extracellular portion of the chain corresponds to leucine 66–threonine 72. A helical membrane pass occupies residues leucine 73–proline 93. The Cytoplasmic portion of the chain corresponds to tyrosine 94–valine 235.

The protein belongs to the DUP/COS family. Interacts according to large scale protein interaction studies with BZZ1, SRB4 and SUA7.

Its subcellular location is the cell membrane. In Saccharomyces cerevisiae (strain ATCC 204508 / S288c) (Baker's yeast), this protein is DUP240 protein DFP4.